The following is a 300-amino-acid chain: Ribosomal protein L11 methyltransferase (300 aa).

S-adenosyl-L-methionine is bound by residues Thr152, Gly173, Asp195, and Asn234.

The protein belongs to the methyltransferase superfamily. PrmA family.

The protein localises to the cytoplasm. The enzyme catalyses L-lysyl-[protein] + 3 S-adenosyl-L-methionine = N(6),N(6),N(6)-trimethyl-L-lysyl-[protein] + 3 S-adenosyl-L-homocysteine + 3 H(+). Methylates ribosomal protein L11. This chain is Ribosomal protein L11 methyltransferase, found in Burkholderia ambifaria (strain MC40-6).